The following is a 394-amino-acid chain: Acryloyl-CoA reductase (NADH) (394 aa).

FAD contacts are provided by residues 135–144 (FALTEPNAGS) and 170–172 (FIS). Ser144 provides a ligand contact to substrate. Substrate is bound at residue 254–257 (DGAR). FAD is bound by residues Arg282, Gln293, and 350-354 (QIHGG). Glu377 acts as the Proton acceptor in catalysis. Gly378 provides a ligand contact to substrate. 379–381 (TSE) contacts FAD.

Heterohexadecamer; tetramer of tetramers. Each tetramer is composed of 2 alpha (AcrC), a beta (AcrA) and a gamma (AcrB) subunit. FAD serves as cofactor.

The protein localises to the cytoplasm. The enzyme catalyses propanoyl-CoA + NAD(+) = acryloyl-CoA + NADH + H(+). Probable catalytic subunit of the acryloyl-CoA reductase complex involved in the pathway of L-alanine fermentation. Catalyzes the irreversible NADH-dependent formation of propionyl-CoA from acryloyl-CoA. It can also use 3-buten-2-one as substrate. In Anaerotignum propionicum (Clostridium propionicum), this protein is Acryloyl-CoA reductase (NADH) (acrC).